Reading from the N-terminus, the 286-residue chain is Ribosome-inactivating protein momordin I (286 aa).

The signal sequence occupies residues 1 to 23 (MSRFSVLSFLILAIFLGGSIVKG). Glutamate 183 is an active-site residue. N-linked (GlcNAc...) asparagine glycosylation is present at asparagine 250. Positions 270-286 (AEGDNGDVSTTHGFSSY) are cleaved as a propeptide — removed in mature form.

The protein belongs to the ribosome-inactivating protein family. Type 1 RIP subfamily.

The catalysed reaction is Endohydrolysis of the N-glycosidic bond at one specific adenosine on the 28S rRNA.. This is Ribosome-inactivating protein momordin I from Momordica charantia (Bitter gourd).